The chain runs to 303 residues: Phosphoglycerate mutase 3 (303 aa).

Substrate is bound by residues 13-20, 26-27, R70, 120-123, K131, and 147-148; these read RHGQSELN, CG, ERHY, and RR. H14 functions as the Tele-phosphohistidine intermediate in the catalytic mechanism. The active-site Proton donor/acceptor is E120. Positions 168–198 are disordered; it reads NDQGSSTGYDFKEPNRHLKYGPEEKANERLP. The span at 177–198 shows a compositional bias: basic and acidic residues; it reads DFKEPNRHLKYGPEEKANERLP. 236-237 provides a ligand contact to substrate; it reads GS.

Belongs to the phosphoglycerate mutase family. BPG-dependent PGAM subfamily.

The enzyme catalyses (2R)-2-phosphoglycerate = (2R)-3-phosphoglycerate. Its pathway is carbohydrate degradation; glycolysis; pyruvate from D-glyceraldehyde 3-phosphate: step 3/5. Could be non-functional. The sequence is that of Phosphoglycerate mutase 3 (GPM3) from Saccharomyces cerevisiae (strain ATCC 204508 / S288c) (Baker's yeast).